A 265-amino-acid chain; its full sequence is MQGIVVIKCGGSTMDQLPDSFFQAIAGLQAQGQEIVIVHGGGPAINSMLDRVQITPQFVDGLRVTCEDTLRVVEMVLCGSINKALVKRLTQAGAKAWGVSGIDGQTLLATKTPKPLGWVGEIKKADMTIPKAILEQGFVPVIAPLSVSEDGTETYNVNADVAAGAIAAALSAEKLIMVTDVPGIMQPQPDGTKAVVSATSAEEIQEMIREEIITGGMIPKVQAALDALGQGVEQVVICRGTAEDLLGVCAGQAVGTTVRMNVNYA.

Residues 41-42, Arg63, and Asn156 each bind substrate; that span reads GG.

The protein belongs to the acetylglutamate kinase family. ArgB subfamily.

It is found in the cytoplasm. It carries out the reaction N-acetyl-L-glutamate + ATP = N-acetyl-L-glutamyl 5-phosphate + ADP. It functions in the pathway amino-acid biosynthesis; L-arginine biosynthesis; N(2)-acetyl-L-ornithine from L-glutamate: step 2/4. Catalyzes the ATP-dependent phosphorylation of N-acetyl-L-glutamate. The polypeptide is Acetylglutamate kinase (Brevibacillus brevis (strain 47 / JCM 6285 / NBRC 100599)).